Reading from the N-terminus, the 193-residue chain is Interleukin-18 (193 aa).

A propeptide spanning residues 1–36 (MAANLIEDNCINLVKMKFVNNTLYFKAESDEGLESD) is cleaved from the precursor.

The protein belongs to the IL-1 family. In terms of assembly, forms a ternary complex with ligand-binding receptor subunit IL18R1 and signaling receptor subunit IL18RAP at the plasma membrane. Mature IL18 first binds to IL18R1 forming a low affinity binary complex, which then interacts with IL18RAP to form a high affinity ternary complex that signals inside the cell. Interacts with cargo receptor TMED10; the interaction mediates the translocation from the cytoplasm into the ERGIC (endoplasmic reticulum-Golgi intermediate compartment) and thereby secretion. Post-translationally, the pro-IL-18 precursor is processed by CASP1, CASP4 or CASP5 to yield its mature, active form. The pro-IL-18 precursor features autoinhibitory interactions between the propeptide and the post-cleavage-site region, preventing recognition by the IL18R1 receptor. Processing by CASP1, CASP4 or CASP5 induces conformational changes to generate critical receptor-binding sites. The mature form is then secreted and released in the extracellular milieu by passing through the gasdermin-D (GSDMD) pore. In contrast, cleavage by CASP3 inactivates IL18.

It is found in the cytoplasm. It localises to the cytosol. The protein localises to the secreted. In terms of biological role, pro-inflammatory cytokine primarily involved in epithelial barrier repair, polarized T-helper 1 (Th1) cell and natural killer (NK) cell immune responses. Upon binding to IL18R1 and IL18RAP, forms a signaling ternary complex which activates NF-kappa-B, triggering synthesis of inflammatory mediators. Synergizes with IL12/interleukin-12 to induce IFNG synthesis from T-helper 1 (Th1) cells and natural killer (NK) cells. Involved in transduction of inflammation downstream of pyroptosis: its mature form is specifically released in the extracellular milieu by passing through the gasdermin-D (GSDMD) pore. In Canis lupus familiaris (Dog), this protein is Interleukin-18 (IL18).